Consider the following 692-residue polypeptide: Elongation factor G (692 aa).

The tr-type G domain occupies 8 to 282 (ENTRNIGIMA…AVIDYLPSPL (275 aa)). Residues 17–24 (AHIDAGKT), 81–85 (DTPGH), and 135–138 (NKMD) contribute to the GTP site.

This sequence belongs to the TRAFAC class translation factor GTPase superfamily. Classic translation factor GTPase family. EF-G/EF-2 subfamily.

It is found in the cytoplasm. Its function is as follows. Catalyzes the GTP-dependent ribosomal translocation step during translation elongation. During this step, the ribosome changes from the pre-translocational (PRE) to the post-translocational (POST) state as the newly formed A-site-bound peptidyl-tRNA and P-site-bound deacylated tRNA move to the P and E sites, respectively. Catalyzes the coordinated movement of the two tRNA molecules, the mRNA and conformational changes in the ribosome. This is Elongation factor G from Bacillus cereus (strain Q1).